Here is a 344-residue protein sequence, read N- to C-terminus: Hyoscyamine 6-dioxygenase (344 aa).

The Fe2OG dioxygenase domain occupies 193 to 293 (QIQMMLTNYY…RVSIATLIGP (101 aa)). Positions 217, 219, and 274 each coordinate Fe cation. Arg284 serves as a coordination point for 2-oxoglutarate.

This sequence belongs to the iron/ascorbate-dependent oxidoreductase family. As to quaternary structure, monomer. Fe(2+) serves as cofactor. Requires L-ascorbate as cofactor. The N-terminus is blocked. Root.

The enzyme catalyses L-hyoscyamine + 2-oxoglutarate + O2 = (6S)-6-hydroxyhyoscyamine + succinate + CO2. The protein operates within alkaloid biosynthesis; scopolamine biosynthesis. In Hyoscyamus niger (Black henbane), this protein is Hyoscyamine 6-dioxygenase (H6H).